Here is a 132-residue protein sequence, read N- to C-terminus: uncharacterized protein (132 aa).

Residues 113 to 132 are disordered; it reads LDPQSPLHSPPLSTSPDSRR.

This is an uncharacterized protein from Saccharomyces cerevisiae (strain ATCC 204508 / S288c) (Baker's yeast).